The sequence spans 169 residues: Cell division inhibitor SulA (169 aa).

The segment at 106–112 is ftsZ binding; that stretch reads ALRTGNY. A lon protease binding region spans residues 162 to 169; that stretch reads KIHSNLYH.

It belongs to the SulA family. As to quaternary structure, interacts with FtsZ. In terms of processing, is rapidly cleaved and degraded by the Lon protease once DNA damage is repaired.

Functionally, component of the SOS system and an inhibitor of cell division. Accumulation of SulA causes rapid cessation of cell division and the appearance of long, non-septate filaments. In the presence of GTP, binds a polymerization-competent form of FtsZ in a 1:1 ratio, thus inhibiting FtsZ polymerization and therefore preventing it from participating in the assembly of the Z ring. This mechanism prevents the premature segregation of damaged DNA to daughter cells during cell division. The chain is Cell division inhibitor SulA from Shigella boydii serotype 4 (strain Sb227).